A 358-amino-acid polypeptide reads, in one-letter code: 3-dehydroquinate synthase (358 aa).

Residues 70–75 (DGEQYK), 104–108 (GVIGD), 128–129 (TT), K141, K150, and 168–171 (CLST) each bind NAD(+). 3 residues coordinate Zn(2+): E183, H246, and H263.

It belongs to the sugar phosphate cyclases superfamily. Dehydroquinate synthase family. The cofactor is Co(2+). Zn(2+) serves as cofactor. It depends on NAD(+) as a cofactor.

It is found in the cytoplasm. The catalysed reaction is 7-phospho-2-dehydro-3-deoxy-D-arabino-heptonate = 3-dehydroquinate + phosphate. It participates in metabolic intermediate biosynthesis; chorismate biosynthesis; chorismate from D-erythrose 4-phosphate and phosphoenolpyruvate: step 2/7. Its function is as follows. Catalyzes the conversion of 3-deoxy-D-arabino-heptulosonate 7-phosphate (DAHP) to dehydroquinate (DHQ). This is 3-dehydroquinate synthase from Shewanella woodyi (strain ATCC 51908 / MS32).